The primary structure comprises 257 residues: N-acetylglucosaminyldiphosphoundecaprenol N-acetyl-beta-D-mannosaminyltransferase (257 aa).

Belongs to the glycosyltransferase 26 family. TagA/TarA subfamily.

The catalysed reaction is UDP-N-acetyl-alpha-D-mannosamine + N-acetyl-alpha-D-glucosaminyl-di-trans,octa-cis-undecaprenyl diphosphate = N-acetyl-beta-D-mannosaminyl-(1-&gt;4)-N-acetyl-alpha-D-glucosaminyl di-trans,octa-cis-undecaprenyl diphosphate + UDP + H(+). Its pathway is cell wall biogenesis; poly(ribitol phosphate) teichoic acid biosynthesis. Catalyzes the conversion of GlcNAc-PP-undecaprenol into ManNAc-GlcNAc-PP-undecaprenol, the first committed lipid intermediate in the de novo synthesis of teichoic acid. This chain is N-acetylglucosaminyldiphosphoundecaprenol N-acetyl-beta-D-mannosaminyltransferase, found in Bacillus spizizenii (strain ATCC 23059 / NRRL B-14472 / W23) (Bacillus subtilis subsp. spizizenii).